Consider the following 131-residue polypeptide: Small ribosomal subunit protein uS8 (131 aa).

This sequence belongs to the universal ribosomal protein uS8 family. In terms of assembly, part of the 30S ribosomal subunit. Contacts proteins S5 and S12.

In terms of biological role, one of the primary rRNA binding proteins, it binds directly to 16S rRNA central domain where it helps coordinate assembly of the platform of the 30S subunit. The chain is Small ribosomal subunit protein uS8 from Hydrogenovibrio crunogenus (strain DSM 25203 / XCL-2) (Thiomicrospira crunogena).